The following is a 100-amino-acid chain: Replication restart protein PriB (100 aa).

In terms of domain architecture, SSB spans 1 to 100; the sequence is MTNRMELSGT…VLHADDIIHI (100 aa).

This sequence belongs to the PriB family. In terms of assembly, homodimer. Interacts with PriA and DnaT. Component of the replication restart primosome. Primosome assembly occurs via a 'hand-off' mechanism. PriA binds to replication forks, subsequently PriB then DnaT bind; DnaT then displaces ssDNA to generate the helicase loading substrate.

Involved in the restart of stalled replication forks, which reloads the replicative helicase on sites other than the origin of replication; the PriA-PriB pathway is the major replication restart pathway. During primosome assembly it facilitates complex formation between PriA and DnaT on DNA; stabilizes PriA on DNA. Stimulates the DNA unwinding activity of PriA helicase. The protein is Replication restart protein PriB of Vibrio vulnificus (strain CMCP6).